The primary structure comprises 164 residues: MSVTIGELIGNFILVTGSVIVLLLLIKAFAWGAIEAVLQARSQQISQDIDQAEQARLNAQQLEKEGQANLEASRSEASQIVEAAKETGKAQETRIVAEATEEADRLKAVALTDIEHSKSEAISAVKTEMSDLTVLLAEKIMGANLDKAAQSQLIDRYLDDLGEA.

The helical transmembrane segment at phenylalanine 12–glycine 32 threads the bilayer.

The protein belongs to the ATPase B chain family. F-type ATPases have 2 components, F(1) - the catalytic core - and F(0) - the membrane proton channel. F(1) has five subunits: alpha(3), beta(3), gamma(1), delta(1), epsilon(1). F(0) has three main subunits: a(1), b(2) and c(10-14). The alpha and beta chains form an alternating ring which encloses part of the gamma chain. F(1) is attached to F(0) by a central stalk formed by the gamma and epsilon chains, while a peripheral stalk is formed by the delta and b chains.

The protein resides in the cell membrane. Functionally, f(1)F(0) ATP synthase produces ATP from ADP in the presence of a proton or sodium gradient. F-type ATPases consist of two structural domains, F(1) containing the extramembraneous catalytic core and F(0) containing the membrane proton channel, linked together by a central stalk and a peripheral stalk. During catalysis, ATP synthesis in the catalytic domain of F(1) is coupled via a rotary mechanism of the central stalk subunits to proton translocation. Component of the F(0) channel, it forms part of the peripheral stalk, linking F(1) to F(0). The polypeptide is ATP synthase subunit b (Streptococcus equi subsp. zooepidemicus (strain MGCS10565)).